The primary structure comprises 1131 residues: Inositol hexakisphosphate and diphosphoinositol-pentakisphosphate kinase 2 (1131 aa).

The interval 21 to 53 (DELLDQSKPENLDNLYEHTEDEEDEEDDEYDSP) is disordered. Over residues 25 to 38 (DQSKPENLDNLYEH) the composition is skewed to basic and acidic residues. The segment covering 39–52 (TEDEEDEEDDEYDS) has biased composition (acidic residues). Position 67-68 (67-68 (KK)) interacts with substrate. ATP-binding positions include Arg-148, Lys-201, His-208, Arg-227, 251–254 (EEFM), and 260–262 (DVK). Substrate is bound at residue 227 to 228 (RK). Substrate is bound by residues Lys-262 and Arg-276. Residues Ser-278, Asp-323, and 335-337 (DVN) each bind ATP. Position 340 to 343 (340 to 343 (SFVK)) interacts with substrate. A polyphosphoinositide-binding domain region spans residues 385–456 (PTTSGTKMEL…VLDIARQLLV (72 aa)). The disordered stretch occupies residues 912–951 (KGCEEDKNLPSGFGYRPASQENESSKKHTHANDSDEDLGV). Residues 934 to 951 (ESSKKHTHANDSDEDLGV) show a composition bias toward basic and acidic residues.

The protein belongs to the histidine acid phosphatase family. VIP1 subfamily.

It localises to the cytoplasm. Its subcellular location is the cytosol. The catalysed reaction is 1D-myo-inositol hexakisphosphate + ATP = 1-diphospho-1D-myo-inositol 2,3,4,5,6-pentakisphosphate + ADP. It carries out the reaction 5-diphospho-1D-myo-inositol 1,2,3,4,6-pentakisphosphate + ATP + H(+) = 1,5-bis(diphospho)-1D-myo-inositol 2,3,4,6-tetrakisphosphate + ADP. Bifunctional inositol kinase that acts in concert with the IP6K kinases IP6K1, IP6K2 and IP6K3 to synthesize the diphosphate group-containing inositol pyrophosphates diphosphoinositol pentakisphosphate, PP-InsP5, and bis-diphosphoinositol tetrakisphosphate, (PP)2-InsP4. PP-InsP5 and (PP)2-InsP4, also respectively called InsP7 and InsP8, regulate a variety of cellular processes, including apoptosis, vesicle trafficking, cytoskeletal dynamics, exocytosis, insulin signaling and neutrophil activation. Phosphorylates inositol hexakisphosphate (InsP6) at position 1 to produce PP-InsP5 which is in turn phosphorylated by IP6Ks to produce (PP)2-InsP4. Alternatively, phosphorylates PP-InsP5 at position 1, produced by IP6Ks from InsP6, to produce (PP)2-InsP4. This Xenopus laevis (African clawed frog) protein is Inositol hexakisphosphate and diphosphoinositol-pentakisphosphate kinase 2.